The primary structure comprises 992 residues: Aminopeptidase Q (992 aa).

The Cytoplasmic portion of the chain corresponds to 2–13 (GPPSSSGFYVSR). A helical; Signal-anchor for type II membrane protein membrane pass occupies residues 14–34 (AVALLLAALAAALLLALAVLA). Residues 35–992 (ALYGRCARVQ…RMTAWLRKNT (958 aa)) lie on the Extracellular side of the membrane. Residues 47-92 (DLHHSGVPDAASSPRGTQEEPLPTWPPRPTREPAGTATPGHWRPPG) are disordered. Asn133 carries N-linked (GlcNAc...) asparagine glycosylation. Glu241 provides a ligand contact to substrate. N-linked (GlcNAc...) asparagine glycosylation is found at Asn262, Asn289, Asn347, and Asn361. Position 380 to 384 (380 to 384 (SAMEN)) interacts with substrate. His416 contacts Zn(2+). The active-site Proton acceptor is the Glu417. His420 and Glu439 together coordinate Zn(2+). Tyr505 functions as the Proton donor in the catalytic mechanism. N-linked (GlcNAc...) asparagine glycosylation is found at Asn555, Asn584, Asn602, Asn609, Asn655, Asn811, Asn850, and Asn889.

This sequence belongs to the peptidase M1 family. The cofactor is Zn(2+). As to expression, expressed in skin. Expression levels do not differ between dark and light skin areas.

The protein resides in the membrane. Its function is as follows. Metalloprotease which may be important for placentation by regulating biological activity of key peptides at the embryo-maternal interface. Involved in coat pigmentation patterns. During skin development, may be required to establish the periodicity of tabby markings, initiating a pre-pattern at or before hair follicle development. This is Aminopeptidase Q (LVRN) from Felis catus (Cat).